The primary structure comprises 174 residues: Interferon gamma (174 aa).

Positions 1-23 are cleaved as a signal peptide; sequence MHTTRCILALLLCLTQAMSGCYC. The residue at position 24 (Gln24) is a Pyrrolidone carboxylic acid. 2 N-linked (GlcNAc...) asparagine glycosylation sites follow: Asn39 and Asn106.

It belongs to the type II (or gamma) interferon family. In terms of assembly, homodimer. Interacts with IFNGR1 (via extracellular domain); this interaction promotes IFNGR1 dimerization. In terms of tissue distribution, released primarily from activated T lymphocytes.

The protein localises to the secreted. Type II interferon produced by immune cells such as T-cells and NK cells that plays crucial roles in antimicrobial, antiviral, and antitumor responses by activating effector immune cells and enhancing antigen presentation. Primarily signals through the JAK-STAT pathway after interaction with its receptor IFNGR1 to affect gene regulation. Upon IFNG binding, IFNGR1 intracellular domain opens out to allow association of downstream signaling components JAK2, JAK1 and STAT1, leading to STAT1 activation, nuclear translocation and transcription of IFNG-regulated genes. Many of the induced genes are transcription factors such as IRF1 that are able to further drive regulation of a next wave of transcription. Plays a role in class I antigen presentation pathway by inducing a replacement of catalytic proteasome subunits with immunoproteasome subunits. In turn, increases the quantity, quality, and repertoire of peptides for class I MHC loading. Increases the efficiency of peptide generation also by inducing the expression of activator PA28 that associates with the proteasome and alters its proteolytic cleavage preference. Up-regulates as well MHC II complexes on the cell surface by promoting expression of several key molecules such as cathepsins B/CTSB, H/CTSH, and L/CTSL. Participates in the regulation of hematopoietic stem cells during development and under homeostatic conditions by affecting their development, quiescence, and differentiation. This Mesocricetus auratus (Golden hamster) protein is Interferon gamma (IFNG).